Reading from the N-terminus, the 380-residue chain is Flagellar P-ring protein (380 aa).

The first 35 residues, 1 to 35 (MRFFTQSPFPLRTLTRRLTAFVCVGLLLLPGFTLA), serve as a signal peptide directing secretion.

It belongs to the FlgI family. The basal body constitutes a major portion of the flagellar organelle and consists of four rings (L,P,S, and M) mounted on a central rod.

It localises to the periplasm. Its subcellular location is the bacterial flagellum basal body. Assembles around the rod to form the L-ring and probably protects the motor/basal body from shearing forces during rotation. In Gluconobacter oxydans (strain 621H) (Gluconobacter suboxydans), this protein is Flagellar P-ring protein.